The primary structure comprises 240 residues: Protein OXIDATIVE STRESS 3 LIKE 4 (240 aa).

Residues 1–128 (MELMAKPTFS…SKSFGNLGEI (128 aa)) form a disordered region. A compositionally biased stretch (polar residues) spans 51–66 (WSGQTADYSSDSSSIG). Positions 70 to 84 (DSEEDEEESENENDD) are enriched in acidic residues. Residues 142-150 (NKRRRLQIC) carry the Nuclear localization signal motif. Residues 163 to 207 (NPKSMPLLPVNEDEDDDDEDDDEEDLKSGFDENKSSSDEEGVKKV) form a disordered region. Positions 173-187 (NEDEDDDDEDDDEED) are enriched in acidic residues. Positions 188–205 (LKSGFDENKSSSDEEGVK) are enriched in basic and acidic residues. A kinase-inducible domain (KID) region spans residues 202 to 229 (EGVKKVVVRKGSFKNRAYKSRSCFALSD). Phosphoserine is present on Ser213.

Interacts with HDA19; Ser-213 is critical for this interaction.

The protein localises to the nucleus. Transcription activator which may regulates gene expression through interaction with the histone deacetylase HDA19. Promotes slightly the tolerance to cadmium (Cd) and to oxidizing chemicals (e.g. diamide and tert-butyl hydroperoxide (t-BOOH)). The sequence is that of Protein OXIDATIVE STRESS 3 LIKE 4 from Arabidopsis thaliana (Mouse-ear cress).